An 83-amino-acid polypeptide reads, in one-letter code: Hainantoxin-III (83 aa).

A signal peptide spans 1-21; that stretch reads MKASMFLALAGLVLLFVVGYA. A propeptide spanning residues 22-48 is cleaved from the precursor; that stretch reads SESEEKEFPRELLSKIFALDDFKGEER. 3 cysteine pairs are disulfide-bonded: Cys50/Cys65, Cys57/Cys70, and Cys64/Cys77. A Leucine amide modification is found at Leu81.

The protein belongs to the neurotoxin 10 (Hwtx-1) family. 15 (Hntx-3) subfamily. As to quaternary structure, monomer. In terms of tissue distribution, expressed by the venom gland.

The protein localises to the secreted. Its function is as follows. Selective antagonist of neuronal tetrodotoxin (TTX)-sensitive voltage-gated sodium channels (IC(50)=1270 nM on Nav1.1/SCN1A, 270 nM on Nav1.2/SCN2A, 491 nM on Nav1.3/SCN3A and 232 nM on Nav1.7/SCN9A). This toxin suppress Nav1.7 current amplitude without significantly altering the activation, inactivation, and repriming kinetics. Short extreme depolarizations partially activate the toxin-bound channel, indicating voltage-dependent inhibition of this toxin. This toxin increases the deactivation of the Nav1.7 current after extreme depolarizations. The toxin-Nav1.7 complex is gradually dissociated upon prolonged strong depolarizations in a voltage-dependent manner, and the unbound toxin rebinds to Nav1.7 after a long repolarization. Moreover, analysis of chimeric channels showed that the DIIS3-S4 linker is critical for toxin binding to Nav1.7. These data are consistent with this toxin interacting with Nav1.7 site 4 and trapping the domain II voltage sensor in the closed state. The polypeptide is Hainantoxin-III (Cyriopagopus hainanus (Chinese bird spider)).